We begin with the raw amino-acid sequence, 457 residues long: MQKYTSEARQLLALAIPVILAQVAQTAMGFVDTVMAGGYSATDMAAVAIGTSIWLPAILFGHGLLLALTPVIAQLNGSGRRERIAHQVRQGFWLAGFVSVLVMIVLWNAGYIIRSMHNIDPALADKAVGYLRALLWGAPGYLFFQVARNQCEGLAKTKPGMVMGFLGLLVNIPVNYIFIYGHFGMPELGGIGCGVATAAVYWVMFIAMLSYIKHARSMRDIRNEKGFGKPDSVVMKRLIQLGLPIALALFFEVTLFAVVALLVSPLGIVDVAGHQIALNFSSLMFVLPMSLAAAVTIRVGYRLGQGSTLDAQTAARTGLGVGICMAVVTAIFTVTLRKHIALLYNDNPEVVALAAQLMLLAAVYQISDSIQIIGSGILRGYKDTRSIFFITFTAYWVLGLPSGYILALTDLVVDRMGPAGFWMGFIIGLTSAAVLMMLRMRYLQRQPSAIILQRAAR.

The Cytoplasmic segment spans residues 1–10 (MQKYTSEARQ). Residues 11-31 (LLALAIPVILAQVAQTAMGFV) traverse the membrane as a helical segment. Topologically, residues 32-52 (DTVMAGGYSATDMAAVAIGTS) are extracellular. Residues 53–73 (IWLPAILFGHGLLLALTPVIA) form a helical membrane-spanning segment. Over 74 to 92 (QLNGSGRRERIAHQVRQGF) the chain is Cytoplasmic. The helical transmembrane segment at 93–113 (WLAGFVSVLVMIVLWNAGYII) threads the bilayer. Residues 114–126 (RSMHNIDPALADK) are Extracellular-facing. The helical transmembrane segment at 127-147 (AVGYLRALLWGAPGYLFFQVA) threads the bilayer. The Cytoplasmic segment spans residues 148–159 (RNQCEGLAKTKP). A helical membrane pass occupies residues 160 to 180 (GMVMGFLGLLVNIPVNYIFIY). At 181–187 (GHFGMPE) the chain is on the extracellular side. A helical transmembrane segment spans residues 188–208 (LGGIGCGVATAAVYWVMFIAM). Over 209 to 242 (LSYIKHARSMRDIRNEKGFGKPDSVVMKRLIQLG) the chain is Cytoplasmic. Residues 243–263 (LPIALALFFEVTLFAVVALLV) form a helical membrane-spanning segment. Over 264 to 275 (SPLGIVDVAGHQ) the chain is Extracellular. The chain crosses the membrane as a helical span at residues 276 to 296 (IALNFSSLMFVLPMSLAAAVT). At 297-313 (IRVGYRLGQGSTLDAQT) the chain is on the cytoplasmic side. The helical transmembrane segment at 314–334 (AARTGLGVGICMAVVTAIFTV) threads the bilayer. The Extracellular portion of the chain corresponds to 335 to 349 (TLRKHIALLYNDNPE). The chain crosses the membrane as a helical span at residues 350 to 370 (VVALAAQLMLLAAVYQISDSI). Over 371-386 (QIIGSGILRGYKDTRS) the chain is Cytoplasmic. A helical membrane pass occupies residues 387-407 (IFFITFTAYWVLGLPSGYILA). At 408-417 (LTDLVVDRMG) the chain is on the extracellular side. The chain crosses the membrane as a helical span at residues 418 to 438 (PAGFWMGFIIGLTSAAVLMML). Over 439–457 (RMRYLQRQPSAIILQRAAR) the chain is Cytoplasmic.

Belongs to the multi antimicrobial extrusion (MATE) (TC 2.A.66.1) family. MdtK subfamily.

It is found in the cell inner membrane. Functionally, multidrug efflux pump that functions probably as a Na(+)/drug antiporter. This Salmonella choleraesuis (strain SC-B67) protein is Multidrug resistance protein MdtK (mdtK).